A 972-amino-acid chain; its full sequence is FHF complex subunit HOOK-interacting protein 1B (972 aa).

Disordered stretches follow at residues 465-496, 510-547, 573-642, and 710-733; these read APSP…VPRP, SLSG…AGEL, SAPY…PGSW, and SFTC…NQLP. Residue Ser467 is modified to Phosphoserine. Residues 479-490 show a composition bias toward low complexity; it reads GPGSPSVDSSSV. A phosphoserine mark is found at Ser510, Ser523, Ser529, and Ser533. Positions 523 to 535 are enriched in low complexity; that stretch reads SPGLSASPASSPG. Positions 618-627 are enriched in gly residues; that stretch reads GLAGGAGEGP. Phosphoserine is present on residues Ser859 and Ser897.

This sequence belongs to the FHIP family. As to quaternary structure, component of the FTS/Hook/FHIP complex (FHF complex), composed of AKTIP/FTS, FHIP1B, and one or more members of the Hook family of proteins HOOK1, HOOK2, and HOOK3. The FHF complex associates with the homotypic vesicular sorting complex (the HOPS complex).

In terms of biological role, component of the FTS/Hook/FHIP complex (FHF complex). The FHF complex may function to promote vesicle trafficking and/or fusion via the homotypic vesicular protein sorting complex (the HOPS complex). FHF complex promotes the distribution of AP-4 complex to the perinuclear area of the cell. The protein is FHF complex subunit HOOK-interacting protein 1B (FHIP1B) of Pongo abelii (Sumatran orangutan).